The chain runs to 426 residues: Serine--tRNA ligase (426 aa).

An L-serine-binding site is contributed by 229 to 231; the sequence is TAE. ATP-binding positions include 260–262 and Val276; that span reads RTE. L-serine is bound at residue Glu283. Residue 350–353 participates in ATP binding; sequence EVTS. Thr386 contacts L-serine.

The protein belongs to the class-II aminoacyl-tRNA synthetase family. Type-1 seryl-tRNA synthetase subfamily. As to quaternary structure, homodimer. The tRNA molecule binds across the dimer.

It localises to the cytoplasm. The catalysed reaction is tRNA(Ser) + L-serine + ATP = L-seryl-tRNA(Ser) + AMP + diphosphate + H(+). The enzyme catalyses tRNA(Sec) + L-serine + ATP = L-seryl-tRNA(Sec) + AMP + diphosphate + H(+). It participates in aminoacyl-tRNA biosynthesis; selenocysteinyl-tRNA(Sec) biosynthesis; L-seryl-tRNA(Sec) from L-serine and tRNA(Sec): step 1/1. In terms of biological role, catalyzes the attachment of serine to tRNA(Ser). Is also able to aminoacylate tRNA(Sec) with serine, to form the misacylated tRNA L-seryl-tRNA(Sec), which will be further converted into selenocysteinyl-tRNA(Sec). This chain is Serine--tRNA ligase, found in Rhodopirellula baltica (strain DSM 10527 / NCIMB 13988 / SH1).